A 247-amino-acid chain; its full sequence is Segregation and condensation protein A (247 aa).

Belongs to the ScpA family. Component of a cohesin-like complex composed of ScpA, ScpB and the Smc homodimer, in which ScpA and ScpB bind to the head domain of Smc. The presence of the three proteins is required for the association of the complex with DNA.

The protein resides in the cytoplasm. Participates in chromosomal partition during cell division. May act via the formation of a condensin-like complex containing Smc and ScpB that pull DNA away from mid-cell into both cell halves. This chain is Segregation and condensation protein A, found in Bacillus anthracis (strain A0248).